The primary structure comprises 408 residues: Energy-coupling factor transporter ATP-binding protein EcfA1 (408 aa).

The ABC transporter domain maps to 140 to 374 (IEIKNLSFKY…KEFLRNIQLD (235 aa)). An ATP-binding site is contributed by 174 to 181 (GHNGSGKS).

Belongs to the ABC transporter superfamily. Energy-coupling factor EcfA family. In terms of assembly, forms a stable energy-coupling factor (ECF) transporter complex composed of 2 membrane-embedded substrate-binding proteins (S component), 2 ATP-binding proteins (A component) and 2 transmembrane proteins (T component).

The protein resides in the cell membrane. ATP-binding (A) component of a common energy-coupling factor (ECF) ABC-transporter complex. Unlike classic ABC transporters this ECF transporter provides the energy necessary to transport a number of different substrates. The polypeptide is Energy-coupling factor transporter ATP-binding protein EcfA1 (Mycoplasma capricolum subsp. capricolum (strain California kid / ATCC 27343 / NCTC 10154)).